The sequence spans 98 residues: MKINQPAVAGTLESGDVMIRIAPLDTQDIDLQINSSVEKQFGDAIRTTILDVLARYNVRGVQLNVDDKGALDCILHARLEALLARASGIPALPWEDCQ.

The residue at position 14 (Ser14) is an O-(phosphoribosyl dephospho-coenzyme A)serine.

It belongs to the CitD family. In terms of assembly, oligomer with a subunit composition of (alpha,beta,gamma)6.

It is found in the cytoplasm. Its function is as follows. Covalent carrier of the coenzyme of citrate lyase. The sequence is that of Citrate lyase acyl carrier protein from Shigella flexneri.